The sequence spans 362 residues: Formyltransferase/hydrolase complex Fhc subunit B (362 aa).

Octaheteromer. Part of the formyltransferase/hydrolase complex fhc; composed of FhcA, FhcB, FhcC and FhcD.

It is found in the cytoplasm. It participates in one-carbon metabolism; formaldehyde degradation; formate from formaldehyde (H(4)MPT route): step 4/5. Its function is as follows. Involved in the transformation of 5-formyl tetrahydromethanopterin (5-formyl-H(4)MPT) to methanofuran (MFR) and formate via the formylmethanofuran (formyl-MFR). The protein is Formyltransferase/hydrolase complex Fhc subunit B (fhcB) of Methylorubrum extorquens (strain ATCC 14718 / DSM 1338 / JCM 2805 / NCIMB 9133 / AM1) (Methylobacterium extorquens).